The following is a 118-amino-acid chain: Small ribosomal subunit protein mS37 (118 aa).

One can recognise a CHCH domain in the interval 42-84 (EATCITEMSVMMACWKQNEFRDDACRKEIQGFLDCAARAQEAR). 2 short sequence motifs (cx9C motif) span residues 45 to 55 (CITEMSVMMAC) and 66 to 76 (CRKEIQGFLDC). 2 cysteine pairs are disulfide-bonded: Cys-45-Cys-76 and Cys-55-Cys-66.

The protein belongs to the mitochondrion-specific ribosomal protein mS37 family. As to quaternary structure, component of the mitochondrial small ribosomal subunit (mt-SSU). Mature mammalian 55S mitochondrial ribosomes consist of a small (28S) and a large (39S) subunit. The 28S small subunit contains a 12S ribosomal RNA (12S mt-rRNA) and 30 different proteins. The 39S large subunit contains a 16S rRNA (16S mt-rRNA), a copy of mitochondrial valine transfer RNA (mt-tRNA(Val)), which plays an integral structural role, and 52 different proteins.

It localises to the mitochondrion. The protein localises to the nucleus. The protein is Small ribosomal subunit protein mS37 (CHCHD1) of Homo sapiens (Human).